Reading from the N-terminus, the 322-residue chain is uncharacterized protein (322 aa).

Residues 1 to 13 (MTNADEQNMGQQE) are compositionally biased toward polar residues. Disordered stretches follow at residues 1–94 (MTNA…EEYE) and 125–322 (RREM…TDEE). Positions 14-31 (GTDTATTAQDTNTQTVGT) are enriched in low complexity. A compositionally biased stretch (polar residues) spans 32-50 (QSENTQNTQQASDAQTEQT). The span at 64–75 (EVDEDDVLDAQE) shows a compositional bias: acidic residues. Basic and acidic residues-rich tracts occupy residues 141–227 (GGDR…RGGD), 235–269 (RPRE…RGGD), 277–295 (RPRE…RTDD), and 308–322 (ARAD…TDEE).

This is an uncharacterized protein from Deinococcus radiodurans (strain ATCC 13939 / DSM 20539 / JCM 16871 / CCUG 27074 / LMG 4051 / NBRC 15346 / NCIMB 9279 / VKM B-1422 / R1).